The sequence spans 125 residues: Large ribosomal subunit protein bL12 (125 aa).

The protein belongs to the bacterial ribosomal protein bL12 family. In terms of assembly, homodimer. Part of the ribosomal stalk of the 50S ribosomal subunit. Forms a multimeric L10(L12)X complex, where L10 forms an elongated spine to which 2 to 4 L12 dimers bind in a sequential fashion. Binds GTP-bound translation factors.

In terms of biological role, forms part of the ribosomal stalk which helps the ribosome interact with GTP-bound translation factors. Is thus essential for accurate translation. In Campylobacter jejuni (strain RM1221), this protein is Large ribosomal subunit protein bL12.